The primary structure comprises 357 residues: DNA integrity scanning protein DisA (357 aa).

The region spanning 8-146 (VKSIINILQL…GNLRYTLKDI (139 aa)) is the DAC domain. ATP contacts are provided by residues glycine 75, leucine 93, and 106-110 (MRHRT).

Belongs to the DisA family. As to quaternary structure, homooctamer. Requires Mg(2+) as cofactor.

It carries out the reaction 2 ATP = 3',3'-c-di-AMP + 2 diphosphate. Participates in a DNA-damage check-point that is active prior to asymmetric division when DNA is damaged. DisA forms globular foci that rapidly scan along the chromosomes during sporulation, searching for lesions. When a lesion is present, DisA pauses at the lesion site. This triggers a cellular response that culminates in a temporary block in sporulation initiation. Functionally, also has diadenylate cyclase activity, catalyzing the condensation of 2 ATP molecules into cyclic di-AMP (c-di-AMP). c-di-AMP acts as a signaling molecule that couples DNA integrity with progression of sporulation. The rise in c-di-AMP level generated by DisA while scanning the chromosome, operates as a positive signal that advances sporulation; upon encountering a lesion, the DisA focus arrests at the damaged site and halts c-di-AMP synthesis. The protein is DNA integrity scanning protein DisA of Bacillus cereus (strain B4264).